We begin with the raw amino-acid sequence, 672 residues long: Glycine--tRNA ligase beta subunit (672 aa).

It belongs to the class-II aminoacyl-tRNA synthetase family. As to quaternary structure, tetramer of two alpha and two beta subunits.

Its subcellular location is the cytoplasm. The enzyme catalyses tRNA(Gly) + glycine + ATP = glycyl-tRNA(Gly) + AMP + diphosphate. This is Glycine--tRNA ligase beta subunit (glyS) from Thermotoga maritima (strain ATCC 43589 / DSM 3109 / JCM 10099 / NBRC 100826 / MSB8).